The primary structure comprises 57 residues: Ribosome modulation factor 2 (57 aa).

Positions 1–24 (MKRQKRDKLGRAHSNGYQAGLGGK) are disordered.

It belongs to the ribosome modulation factor family.

The protein localises to the cytoplasm. Its function is as follows. During stationary phase, converts 70S ribosomes to an inactive dimeric form (100S ribosomes). The sequence is that of Ribosome modulation factor 2 from Colwellia psychrerythraea (strain 34H / ATCC BAA-681) (Vibrio psychroerythus).